Consider the following 181-residue polypeptide: Ribulose bisphosphate carboxylase small subunit, chloroplastic 2 (181 aa).

The transit peptide at 1 to 57 (MAFLIMSSAAAVATGTNAAQASMIAPFTGLKSATSFPVSRKQNLDITSIASNGGRVQ) directs the protein to the chloroplast.

Belongs to the RuBisCO small chain family. In terms of assembly, heterohexadecamer of 8 large and 8 small subunits.

The protein resides in the plastid. It localises to the chloroplast. In terms of biological role, ruBisCO catalyzes two reactions: the carboxylation of D-ribulose 1,5-bisphosphate, the primary event in carbon dioxide fixation, as well as the oxidative fragmentation of the pentose substrate. Both reactions occur simultaneously and in competition at the same active site. Although the small subunit is not catalytic it is essential for maximal activity. This chain is Ribulose bisphosphate carboxylase small subunit, chloroplastic 2, found in Nicotiana sylvestris (Wood tobacco).